A 433-amino-acid polypeptide reads, in one-letter code: Bifunctional protein GlmU (433 aa).

Residues 1 to 226 (MLSVIILAAG…EECFLGVNSQ (226 aa)) form a pyrophosphorylase region. UDP-N-acetyl-alpha-D-glucosamine is bound by residues 7 to 10 (LAAG), K21, and 80 to 81 (GT). Mg(2+) is bound at residue D106. G138, E152, N167, and N224 together coordinate UDP-N-acetyl-alpha-D-glucosamine. N224 lines the Mg(2+) pocket. A linker region spans residues 227 to 247 (TERAKAEEIMLERLRKNAMDL). The segment at 248-433 (GVVMQLPSSI…NGYFKFFKKP (186 aa)) is N-acetyltransferase. 2 residues coordinate UDP-N-acetyl-alpha-D-glucosamine: R311 and K328. H339 (proton acceptor) is an active-site residue. UDP-N-acetyl-alpha-D-glucosamine is bound by residues Y342 and N353. Acetyl-CoA-binding positions include A356, 362-363 (NY), S381, S399, and R416.

This sequence in the N-terminal section; belongs to the N-acetylglucosamine-1-phosphate uridyltransferase family. In the C-terminal section; belongs to the transferase hexapeptide repeat family. In terms of assembly, homotrimer. Requires Mg(2+) as cofactor.

It is found in the cytoplasm. It carries out the reaction alpha-D-glucosamine 1-phosphate + acetyl-CoA = N-acetyl-alpha-D-glucosamine 1-phosphate + CoA + H(+). The catalysed reaction is N-acetyl-alpha-D-glucosamine 1-phosphate + UTP + H(+) = UDP-N-acetyl-alpha-D-glucosamine + diphosphate. Its pathway is nucleotide-sugar biosynthesis; UDP-N-acetyl-alpha-D-glucosamine biosynthesis; N-acetyl-alpha-D-glucosamine 1-phosphate from alpha-D-glucosamine 6-phosphate (route II): step 2/2. It functions in the pathway nucleotide-sugar biosynthesis; UDP-N-acetyl-alpha-D-glucosamine biosynthesis; UDP-N-acetyl-alpha-D-glucosamine from N-acetyl-alpha-D-glucosamine 1-phosphate: step 1/1. It participates in bacterial outer membrane biogenesis; LPS lipid A biosynthesis. In terms of biological role, catalyzes the last two sequential reactions in the de novo biosynthetic pathway for UDP-N-acetylglucosamine (UDP-GlcNAc). The C-terminal domain catalyzes the transfer of acetyl group from acetyl coenzyme A to glucosamine-1-phosphate (GlcN-1-P) to produce N-acetylglucosamine-1-phosphate (GlcNAc-1-P), which is converted into UDP-GlcNAc by the transfer of uridine 5-monophosphate (from uridine 5-triphosphate), a reaction catalyzed by the N-terminal domain. This chain is Bifunctional protein GlmU, found in Helicobacter pylori (strain HPAG1).